A 391-amino-acid polypeptide reads, in one-letter code: Putative neutrophil cytosol factor 1B (391 aa).

A PX domain is found at Met1 to Leu126. 2 consecutive SH3 domains span residues Ile157–Ser216 and Tyr227–Gln286. Residues Gln286–Val391 are disordered. Phosphoserine occurs at positions 304 and 305. Residues His310 to Arg319 show a composition bias toward basic residues. Residues Ser321, Ser329, Ser346, and Ser349 each carry the phosphoserine modification.

The protein resides in the cytoplasm. In terms of biological role, may be required for activation of the latent NADPH oxidase (necessary for superoxide production). In Homo sapiens (Human), this protein is Putative neutrophil cytosol factor 1B (NCF1B).